We begin with the raw amino-acid sequence, 343 residues long: 3-dehydroquinate synthase (343 aa).

Residues 86-90 (GALLD), 110-111 (TT), K123, and K132 contribute to the NAD(+) site. Positions 165, 229, and 243 each coordinate Zn(2+).

Belongs to the sugar phosphate cyclases superfamily. Dehydroquinate synthase family. It depends on Co(2+) as a cofactor. Zn(2+) serves as cofactor. NAD(+) is required as a cofactor.

It is found in the cytoplasm. It carries out the reaction 7-phospho-2-dehydro-3-deoxy-D-arabino-heptonate = 3-dehydroquinate + phosphate. It participates in metabolic intermediate biosynthesis; chorismate biosynthesis; chorismate from D-erythrose 4-phosphate and phosphoenolpyruvate: step 2/7. Its function is as follows. Catalyzes the conversion of 3-deoxy-D-arabino-heptulosonate 7-phosphate (DAHP) to dehydroquinate (DHQ). The sequence is that of 3-dehydroquinate synthase from Pyrobaculum islandicum (strain DSM 4184 / JCM 9189 / GEO3).